The chain runs to 511 residues: ATP synthase subunit alpha (511 aa).

An ATP-binding site is contributed by 169-176; sequence GDRQTGKT.

The protein belongs to the ATPase alpha/beta chains family. As to quaternary structure, F-type ATPases have 2 components, CF(1) - the catalytic core - and CF(0) - the membrane proton channel. CF(1) has five subunits: alpha(3), beta(3), gamma(1), delta(1), epsilon(1). CF(0) has three main subunits: a(1), b(2) and c(9-12). The alpha and beta chains form an alternating ring which encloses part of the gamma chain. CF(1) is attached to CF(0) by a central stalk formed by the gamma and epsilon chains, while a peripheral stalk is formed by the delta and b chains.

It localises to the cell inner membrane. The catalysed reaction is ATP + H2O + 4 H(+)(in) = ADP + phosphate + 5 H(+)(out). Its function is as follows. Produces ATP from ADP in the presence of a proton gradient across the membrane. The alpha chain is a regulatory subunit. The chain is ATP synthase subunit alpha from Paracoccus denitrificans (strain Pd 1222).